A 390-amino-acid polypeptide reads, in one-letter code: Chorismate synthase 2 (390 aa).

Positions 39 and 45 each coordinate NADP(+). FMN contacts are provided by residues 132–134 (RSS), 253–254 (NA), glycine 298, 313–317 (KPIPT), and arginine 339.

Belongs to the chorismate synthase family. In terms of assembly, homotetramer. It depends on FMNH2 as a cofactor.

It catalyses the reaction 5-O-(1-carboxyvinyl)-3-phosphoshikimate = chorismate + phosphate. The protein operates within metabolic intermediate biosynthesis; chorismate biosynthesis; chorismate from D-erythrose 4-phosphate and phosphoenolpyruvate: step 7/7. In terms of biological role, catalyzes the anti-1,4-elimination of the C-3 phosphate and the C-6 proR hydrogen from 5-enolpyruvylshikimate-3-phosphate (EPSP) to yield chorismate, which is the branch point compound that serves as the starting substrate for the three terminal pathways of aromatic amino acid biosynthesis. This reaction introduces a second double bond into the aromatic ring system. The protein is Chorismate synthase 2 of Bacillus cereus (strain ZK / E33L).